Here is an 88-residue protein sequence, read N- to C-terminus: Large ribosomal subunit protein eL20 (88 aa).

This sequence belongs to the eukaryotic ribosomal protein eL20 family. In terms of assembly, part of the 50S ribosomal subunit. Binds 23S rRNA.

The sequence is that of Large ribosomal subunit protein eL20 from Aeropyrum pernix (strain ATCC 700893 / DSM 11879 / JCM 9820 / NBRC 100138 / K1).